The sequence spans 829 residues: Telomere length regulation protein TEL2 homolog (829 aa).

2 disordered regions span residues 446–493 (SADF…DDLV) and 620–641 (SEKPSHETSAESGSVNTDPHSI). A compositionally biased stretch (low complexity) spans 456 to 466 (SSPSKSPLSSP). Over residues 467–480 (EVREKSKVKVKADQ) the composition is skewed to basic and acidic residues. A compositionally biased stretch (acidic residues) spans 482-493 (SDSDLDSDDDLV). Residues 629–641 (AESGSVNTDPHSI) show a composition bias toward polar residues.

Belongs to the TEL2 family.

The protein localises to the cytoplasm. It is found in the membrane. The protein resides in the nucleus. It localises to the chromosome. Its subcellular location is the telomere. Regulator of the DNA damage response (DDR). Part of the TTT complex that is required to stabilize protein levels of the phosphatidylinositol 3-kinase-related protein kinase (PIKK) family proteins. Promotes assembly, stabilizes and maintains the activity of TORC complexes, which regulate cell growth and survival in response to nutrient and hormonal signals. May be involved in telomere length regulation. This is Telomere length regulation protein TEL2 homolog (telo2) from Xenopus tropicalis (Western clawed frog).